A 481-amino-acid chain; its full sequence is Endonuclease Bax1 (481 aa).

The tract at residues 1-136 (MLPWELARFS…EKKIIKAPTI (136 aa)) is N-terminal domain (NTD). The central domain (CRD) stretch occupies residues 158–250 (YKLTVYVSSN…LKLANFKELK (93 aa)). Residues 260 to 364 (DSSVEEKFYK…YKRKIDISLV (105 aa)) form a nuclease domain (NUS) region. A divalent metal cation-binding residues include Glu-265, Asp-297, and Glu-310. Residues 414–481 (PGYIFLKNYY…AIVIKDKKVN (68 aa)) form a C-terminal domain (CTD) region.

Belongs to the Bax1 family. In terms of assembly, homodimer in solution, forms a heterodimer with XPB2. Requires a divalent metal cation as cofactor.

In terms of biological role, a dual DNA endonuclease probably involved in nucleotide excision repair (NER). The N-terminal nuclease domain (NTD) of the XPB2-Bax1 complex cleaves on one side of a DNA bubble (which presumably mimics DNA damage), while the NUS nuclease domain cleaves the other side, respectively called 5' and 3' nuclease activities. Interaction with XPB blocks the NTD nuclease activity. Binds to and stimulates the ATPase activity (and probably also helicase activity) of XPB2. Increases affinity of XPB2 for forked DNA. Does not stimulate the DNA-dependent activity of XPB1. In an XPB2-Bax1-bubble DNA crystal (12 bp of dsDNA, a 6 base bubble and 6 bp of dsDNA) the short 6 bp arm is unwound. The 2 helicase and the ThM domains of XPB2 with the NTD and CRD domains of Bax1 encircle the DNA, forming a tunnel where the 12 bp dsDNA and the ds-ssDNA junction are located. The ThM domain is wedged between the ssDNA tails, with the 5' ssDNA contacting Bax1 and the 3' ssDNA in a channel in XPB2. The nuclease domain (NUS) of Bax1 does not contact DNA in the bubble DNA complex. The sequence is that of Endonuclease Bax1 from Sulfurisphaera tokodaii (strain DSM 16993 / JCM 10545 / NBRC 100140 / 7) (Sulfolobus tokodaii).